The chain runs to 556 residues: Adenine deaminase (556 aa).

It belongs to the metallo-dependent hydrolases superfamily. Adenine deaminase family. Mn(2+) serves as cofactor.

It catalyses the reaction adenine + H2O + H(+) = hypoxanthine + NH4(+). The polypeptide is Adenine deaminase (Archaeoglobus fulgidus (strain ATCC 49558 / DSM 4304 / JCM 9628 / NBRC 100126 / VC-16)).